Here is a 267-residue protein sequence, read N- to C-terminus: Ribosomal RNA small subunit methyltransferase A (267 aa).

Positions 18, 20, 45, 66, 91, and 112 each coordinate S-adenosyl-L-methionine.

This sequence belongs to the class I-like SAM-binding methyltransferase superfamily. rRNA adenine N(6)-methyltransferase family. RsmA subfamily.

The protein resides in the cytoplasm. It carries out the reaction adenosine(1518)/adenosine(1519) in 16S rRNA + 4 S-adenosyl-L-methionine = N(6)-dimethyladenosine(1518)/N(6)-dimethyladenosine(1519) in 16S rRNA + 4 S-adenosyl-L-homocysteine + 4 H(+). Functionally, specifically dimethylates two adjacent adenosines (A1518 and A1519) in the loop of a conserved hairpin near the 3'-end of 16S rRNA in the 30S particle. May play a critical role in biogenesis of 30S subunits. The chain is Ribosomal RNA small subunit methyltransferase A from Shewanella woodyi (strain ATCC 51908 / MS32).